The sequence spans 209 residues: Ribonuclease HII (209 aa).

The 191-residue stretch at 19–209 folds into the RNase H type-2 domain; it reads CIIVGVDEVG…LPGITKLYSK (191 aa). A divalent metal cation-binding residues include D25, E26, and D118.

Belongs to the RNase HII family. Requires Mn(2+) as cofactor. Mg(2+) is required as a cofactor.

The protein localises to the cytoplasm. It carries out the reaction Endonucleolytic cleavage to 5'-phosphomonoester.. Its function is as follows. Endonuclease that specifically degrades the RNA of RNA-DNA hybrids. This is Ribonuclease HII from Ehrlichia canis (strain Jake).